The sequence spans 989 residues: Phosphoenolpyruvate carboxylase (989 aa).

Catalysis depends on residues H175 and K630.

This sequence belongs to the PEPCase type 1 family. Mg(2+) is required as a cofactor.

The catalysed reaction is oxaloacetate + phosphate = phosphoenolpyruvate + hydrogencarbonate. Forms oxaloacetate, a four-carbon dicarboxylic acid source for the tricarboxylic acid cycle. The polypeptide is Phosphoenolpyruvate carboxylase (Prochlorococcus marinus (strain AS9601)).